The chain runs to 229 residues: 1-Cys peroxiredoxin PER1 (229 aa).

A Thioredoxin domain is found at 4-173 (LTIGDTVPNL…VLRAVDSLLT (170 aa)). Catalysis depends on cysteine 46, which acts as the Cysteine sulfenic acid (-SOH) intermediate. The Bipartite nuclear localization signal motif lies at 205–228 (RKMFPQGFETADLPSKKGYLRFTK).

It belongs to the peroxiredoxin family. Prx6 subfamily.

Its subcellular location is the nucleus. It localises to the cytoplasm. It carries out the reaction a hydroperoxide + [thioredoxin]-dithiol = an alcohol + [thioredoxin]-disulfide + H2O. Functionally, thiol-specific peroxidase that catalyzes the reduction of hydrogen peroxide and organic hydroperoxides to water and alcohols, respectively. Seems to contribute to the inhibition of germination during stress. The protein is 1-Cys peroxiredoxin PER1 (PER1) of Zea mays (Maize).